A 292-amino-acid chain; its full sequence is Protein LicB (292 aa).

2 EamA domains span residues Ala-70–Ile-139 and Leu-160–Tyr-286.

The chain is Protein LicB (licB) from Haemophilus influenzae (strain ATCC 51907 / DSM 11121 / KW20 / Rd).